The following is a 184-amino-acid chain: MKVRAFLAVDLDEGLRDHVSRIQDTLKSADAQVKFVEPENLHFTLKFFGDVGEGKLRRIENVVRDTLRGYEPFEISIRGAGVFPNPRYIRVVWLGVENPETFSDLQRSLDMEFVKMGFRPERDYVPHLTVGRVKGPRNRDKLAELIGELQNVEVGSMRVSEVSLKRSELTPAGPIYTDMEVFRL.

Residue H42 is the Proton donor of the active site. 2 consecutive short sequence motifs (HXTX) follow at residues 42 to 45 (HFTL) and 127 to 130 (HLTV). Catalysis depends on H127, which acts as the Proton acceptor.

It belongs to the 2H phosphoesterase superfamily. ThpR family.

It catalyses the reaction a 3'-end 2',3'-cyclophospho-ribonucleotide-RNA + H2O = a 3'-end 2'-phospho-ribonucleotide-RNA + H(+). In terms of biological role, hydrolyzes RNA 2',3'-cyclic phosphodiester to an RNA 2'-phosphomonoester. This chain is RNA 2',3'-cyclic phosphodiesterase, found in Methanothermobacter thermautotrophicus (strain ATCC 29096 / DSM 1053 / JCM 10044 / NBRC 100330 / Delta H) (Methanobacterium thermoautotrophicum).